Here is a 182-residue protein sequence, read N- to C-terminus: Adenine phosphoribosyltransferase (182 aa).

This sequence belongs to the purine/pyrimidine phosphoribosyltransferase family. Homodimer.

The protein localises to the cytoplasm. The catalysed reaction is AMP + diphosphate = 5-phospho-alpha-D-ribose 1-diphosphate + adenine. It participates in purine metabolism; AMP biosynthesis via salvage pathway; AMP from adenine: step 1/1. In terms of biological role, catalyzes a salvage reaction resulting in the formation of AMP, that is energically less costly than de novo synthesis. The chain is Adenine phosphoribosyltransferase from Campylobacter jejuni subsp. doylei (strain ATCC BAA-1458 / RM4099 / 269.97).